The sequence spans 240 residues: MORN repeat-containing protein 3 (240 aa).

Positions 6-35 (CPKKSESLWKGWDRKAQKNGLRRQVYAVNG) are interaction with MDM2. MORN repeat units lie at residues 38-60 (YVGE…KNGA), 62-84 (YEGD…DQQT), 91-113 (YSGW…PKEY), 114-136 (YEGE…NGDI), 137-159 (YEGQ…NGNR), 160-182 (YEGC…DHGQ), and 184-205 (FEGF…GRDE). Positions 76–100 (TLSLPDQQTGKCRRVYSGWWKGDKK) are interaction with SIRT1. The interaction with TP53 stretch occupies residues 206–240 (APEPTQFPIPEVKILDPDGVLAQALAMFKKTEEGD).

Interacts with MEIG1. Interacts with TP53, MDM2 and SIRT1; the interactions mediate post-transcriptional modifications of TP53 by MDM2 and SIRT1.

The protein localises to the cytoplasmic vesicle. The protein resides in the secretory vesicle. Its subcellular location is the acrosome. In terms of biological role, assembles a suppression complex (suppresome) by tethering SIRT1 and MDM2 to regulate composite modifications of p53/TP53. Confers both deacetylation-mediated functional inactivation, by SIRT1, and ubiquitination-dependent degradation, by MDM2, of p53/TP53, promoting a proliferative and cell survival behaviors. May play a role in the regulation of spermatogenesis. This chain is MORN repeat-containing protein 3 (MORN3), found in Macaca fascicularis (Crab-eating macaque).